The following is a 273-amino-acid chain: Dermonecrotic toxin LarSicTox-alphaIB1aii (273 aa).

Histidine 5 is a catalytic residue. Mg(2+) is bound by residues glutamate 25 and aspartate 27. Histidine 41 (nucleophile) is an active-site residue. Disulfide bonds link cysteine 45–cysteine 51 and cysteine 47–cysteine 190. Aspartate 85 contributes to the Mg(2+) binding site. Residue asparagine 250 is glycosylated (N-linked (GlcNAc...) asparagine).

It belongs to the arthropod phospholipase D family. Class II subfamily. Mg(2+) serves as cofactor. In terms of tissue distribution, expressed by the venom gland.

The protein resides in the secreted. The enzyme catalyses an N-(acyl)-sphingosylphosphocholine = an N-(acyl)-sphingosyl-1,3-cyclic phosphate + choline. The catalysed reaction is an N-(acyl)-sphingosylphosphoethanolamine = an N-(acyl)-sphingosyl-1,3-cyclic phosphate + ethanolamine. It catalyses the reaction a 1-acyl-sn-glycero-3-phosphocholine = a 1-acyl-sn-glycero-2,3-cyclic phosphate + choline. It carries out the reaction a 1-acyl-sn-glycero-3-phosphoethanolamine = a 1-acyl-sn-glycero-2,3-cyclic phosphate + ethanolamine. Its function is as follows. Dermonecrotic toxins cleave the phosphodiester linkage between the phosphate and headgroup of certain phospholipids (sphingolipid and lysolipid substrates), forming an alcohol (often choline) and a cyclic phosphate. This toxin acts on sphingomyelin (SM). It may also act on ceramide phosphoethanolamine (CPE), lysophosphatidylcholine (LPC) and lysophosphatidylethanolamine (LPE), but not on lysophosphatidylserine (LPS), and lysophosphatidylglycerol (LPG). It acts by transphosphatidylation, releasing exclusively cyclic phosphate products as second products. Induces dermonecrosis, hemolysis, increased vascular permeability, edema, inflammatory response, and platelet aggregation. This chain is Dermonecrotic toxin LarSicTox-alphaIB1aii, found in Loxosceles arizonica (Arizona brown spider).